Consider the following 299-residue polypeptide: ATP phosphoribosyltransferase (299 aa).

It belongs to the ATP phosphoribosyltransferase family. Long subfamily. In terms of assembly, equilibrium between an active dimeric form, an inactive hexameric form and higher aggregates. Interconversion between the various forms is largely reversible and is influenced by the natural substrates and inhibitors of the enzyme. Mg(2+) serves as cofactor.

The protein localises to the cytoplasm. The catalysed reaction is 1-(5-phospho-beta-D-ribosyl)-ATP + diphosphate = 5-phospho-alpha-D-ribose 1-diphosphate + ATP. The protein operates within amino-acid biosynthesis; L-histidine biosynthesis; L-histidine from 5-phospho-alpha-D-ribose 1-diphosphate: step 1/9. Its activity is regulated as follows. Feedback inhibited by histidine. Functionally, catalyzes the condensation of ATP and 5-phosphoribose 1-diphosphate to form N'-(5'-phosphoribosyl)-ATP (PR-ATP). Has a crucial role in the pathway because the rate of histidine biosynthesis seems to be controlled primarily by regulation of HisG enzymatic activity. The chain is ATP phosphoribosyltransferase from Pectobacterium carotovorum subsp. carotovorum (strain PC1).